A 306-amino-acid polypeptide reads, in one-letter code: MDRTTARPNRRAVLATGVGAALAATAAAAGPAHAAPGRGARVEGRLRALERTHDARLGAFAYDTGTGRTVAYRADERFPIASMFKTIAVAAVLRDLDRDGEVLARRVHYTADYVKRSGYSPVTGLPENVANGMTVAELCEATLTRSDNTAANLLLRDLGGPTAVTRFCRSVGDHVTRLDRWEPELNSAEPGRVTDTTSPRAIGRTYGRLILGDLLAAHDRERLTRWMLDNRTSDERFRKGLPADWLLADKTGGGDYGTNNDAGVAWPPGRPPVVLAVQTTRFTPDAEADNVLVAEAARLLAEAMTD.

The segment at residues 1 to 34 (MDRTTARPNRRAVLATGVGAALAATAAAAGPAHA) is a signal peptide (tat-type signal). S82 serves as the catalytic Acyl-ester intermediate. Substrate is bound at residue 250 to 252 (KTG).

The protein belongs to the class-A beta-lactamase family. Predicted to be exported by the Tat system. The position of the signal peptide cleavage has not been experimentally proven.

The enzyme catalyses a beta-lactam + H2O = a substituted beta-amino acid. This chain is Beta-lactamase (blaF), found in Streptomyces fradiae (Streptomyces roseoflavus).